The following is a 762-amino-acid chain: 5-methyltetrahydropteroyltriglutamate--homocysteine methyltransferase (762 aa).

5-methyltetrahydropteroyltri-L-glutamate is bound by residues Arg-16–Lys-19 and Lys-117. L-homocysteine contacts are provided by residues Ile-438 to Ser-440 and Glu-491. Residues Ile-438–Ser-440 and Glu-491 each bind L-methionine. Residues Arg-522 to Cys-523 and Trp-568 contribute to the 5-methyltetrahydropteroyltri-L-glutamate site. Position 606 (Asp-606) interacts with L-homocysteine. Position 606 (Asp-606) interacts with L-methionine. Position 612 (Glu-612) interacts with 5-methyltetrahydropteroyltri-L-glutamate. The Zn(2+) site is built by His-648, Cys-650, and Glu-672. Catalysis depends on His-701, which acts as the Proton donor. Zn(2+) is bound at residue Cys-733.

It belongs to the vitamin-B12 independent methionine synthase family. The cofactor is Zn(2+).

It catalyses the reaction 5-methyltetrahydropteroyltri-L-glutamate + L-homocysteine = tetrahydropteroyltri-L-glutamate + L-methionine. It participates in amino-acid biosynthesis; L-methionine biosynthesis via de novo pathway; L-methionine from L-homocysteine (MetE route): step 1/1. Its function is as follows. Catalyzes the transfer of a methyl group from 5-methyltetrahydrofolate to homocysteine resulting in methionine formation. This chain is 5-methyltetrahydropteroyltriglutamate--homocysteine methyltransferase, found in Pseudomonas fluorescens (strain ATCC BAA-477 / NRRL B-23932 / Pf-5).